Here is a 184-residue protein sequence, read N- to C-terminus: UPF0398 protein BCAH820_1652 (184 aa).

It belongs to the UPF0398 family.

The protein is UPF0398 protein BCAH820_1652 of Bacillus cereus (strain AH820).